Here is a 103-residue protein sequence, read N- to C-terminus: Transcription factor S (103 aa).

Residues C4, C7, C20, C23, C64, C67, C92, and C95 each coordinate Zn(2+). The segment at 4–23 (CPKCKSLMIYQGDKLVCRKC) adopts a C4-type zinc-finger fold. The TFIIS-type zinc finger occupies 60-100 (TKAICPACGHNEAFWWLRQLRAADESEVRFFRCTKCGKTWR).

It belongs to the archaeal RpoM/eukaryotic RPA12/RPB9/RPC11 RNA polymerase family.

Induces RNA cleavage activity in the RNA polymerase. In its presence, the cleavage activity of the RNA polymerase truncates the RNA back to position +15 in a stepwise manner by releasing mainly dinucleotides from the 3'-end of the nascent RNA. The truncated RNAs are able to continue elongation. Involved in transcriptional proofreading and fidelity. Misincorporation of nucleotides during elongation of transcription leads to arrested elongation complexes which are rescued by TFS-promoted removal of a dinucleotide from the 3'-end. TFS is able to induce a cleavage resynthesis cycle in stalled elongation complexes (resulting from the next missing nucleotide or a reduced incorporation rate of a wrong nucleotide) preventing misincorporation and enabling proofreading in a post-incorporation manner. Pausing of elongation complexes is the main determinant of TFS-induced RNA cleavage. The sequence is that of Transcription factor S from Archaeoglobus fulgidus (strain ATCC 49558 / DSM 4304 / JCM 9628 / NBRC 100126 / VC-16).